Consider the following 471-residue polypeptide: Citrate synthase, mitochondrial (471 aa).

Active-site residues include His309, His355, and Asp409.

It belongs to the citrate synthase family. In terms of assembly, homodimer. In terms of tissue distribution, ubiquitous.

Its subcellular location is the mitochondrion matrix. The enzyme catalyses oxaloacetate + acetyl-CoA + H2O = citrate + CoA + H(+). Its pathway is carbohydrate metabolism; tricarboxylic acid cycle; isocitrate from oxaloacetate: step 1/2. The protein is Citrate synthase, mitochondrial of Solanum tuberosum (Potato).